Reading from the N-terminus, the 290-residue chain is MDARAVAKRPRDPADEDNELVTALKAKREVNTISVRYLYHADHQALTARFFVPEGLVEFEAQPGALLIRMETGCDSPRHLYISLYLLGIRASNVSASTRCLLESVYTASAARAALQWLDLGPHLLHRRLETLGCVKTVSLGITSLLTCVMRGYLYNTLKTEVFALMIPKDMYLTWEETRGRLQYVYLIIVYDYDGPETRPGIYVLTSSIAHWQTLVDVARGKFARERCSFVNRRITRPRQIPLCTGVIQKLGWCLADDIHTSFLVHKELKLSVVRLDNFSVELGDFREFV.

It belongs to the herpesviridae TRX1 protein family. In terms of assembly, interacts with TRX2, MCP and capsid vertex component 2/CVC2.

Its subcellular location is the virion. It localises to the host nucleus. In terms of biological role, structural component of the T=16 icosahedral capsid. The capsid is composed of pentamers and hexamers of major capsid protein/MCP, which are linked together by heterotrimers called triplexes. These triplexes are formed by a single molecule of triplex protein 1/TRX1 and two copies of triplex protein 2/TRX2. Additionally, TRX1 is required for efficient transport of TRX2 to the nucleus, which is the site of capsid assembly. The protein is Triplex capsid protein 1 of Human cytomegalovirus (strain AD169) (HHV-5).